The chain runs to 514 residues: Peptide chain release factor 3 (514 aa).

The 261-residue stretch at 8–268 folds into the tr-type G domain; sequence KKRRTFAIIS…TFLKFAPEPH (261 aa). Residues 17 to 24, 85 to 89, and 139 to 142 contribute to the GTP site; these read SHPDAGKT, DTPGH, and NKLD.

The protein belongs to the TRAFAC class translation factor GTPase superfamily. Classic translation factor GTPase family. PrfC subfamily.

The protein resides in the cytoplasm. In terms of biological role, increases the formation of ribosomal termination complexes and stimulates activities of RF-1 and RF-2. It binds guanine nucleotides and has strong preference for UGA stop codons. It may interact directly with the ribosome. The stimulation of RF-1 and RF-2 is significantly reduced by GTP and GDP, but not by GMP. The protein is Peptide chain release factor 3 of Streptococcus gordonii (strain Challis / ATCC 35105 / BCRC 15272 / CH1 / DL1 / V288).